The chain runs to 212 residues: Urease accessory protein UreG (212 aa).

15-22 (GPVGSGKT) is a binding site for GTP.

The protein belongs to the SIMIBI class G3E GTPase family. UreG subfamily. Homodimer. UreD, UreF and UreG form a complex that acts as a GTP-hydrolysis-dependent molecular chaperone, activating the urease apoprotein by helping to assemble the nickel containing metallocenter of UreC. The UreE protein probably delivers the nickel.

It is found in the cytoplasm. In terms of biological role, facilitates the functional incorporation of the urease nickel metallocenter. This process requires GTP hydrolysis, probably effectuated by UreG. The polypeptide is Urease accessory protein UreG (Opitutus terrae (strain DSM 11246 / JCM 15787 / PB90-1)).